We begin with the raw amino-acid sequence, 258 residues long: Thrombin-like enzyme CPI-enzyme 2 (258 aa).

The N-terminal stretch at 1-18 (MVLIRVLANLLILQLSYA) is a signal peptide. A propeptide spanning residues 19–24 (QKSSEL) is cleaved from the precursor. Residues 25–249 (VIGGDECNIN…YTDWIENIIA (225 aa)) enclose the Peptidase S1 domain. 6 disulfides stabilise this stretch: Cys-31–Cys-163, Cys-50–Cys-66, Cys-98–Cys-256, Cys-142–Cys-210, Cys-174–Cys-189, and Cys-200–Cys-225. A glycan (N-linked (GlcNAc...) asparagine) is linked at Asn-44. Residue His-65 is the Charge relay system of the active site. 2 N-linked (GlcNAc...) asparagine glycosylation sites follow: Asn-79 and Asn-103. The active-site Charge relay system is the Asp-110. N-linked (GlcNAc...) asparagine glycosylation occurs at Asn-121. The active-site Charge relay system is Ser-204.

Belongs to the peptidase S1 family. Snake venom subfamily. As to quaternary structure, monomer. Post-translationally, N-glycosylated. In terms of tissue distribution, expressed by the venom gland.

Its subcellular location is the secreted. Its function is as follows. Thrombin-like snake venom serine protease that cleaves fibrinogen beta (FGB) releasing fibrinopeptide B. Promotes capillary permeability-increasing activity through the release of peptides from the beta-chain of fibrinogen. The chain is Thrombin-like enzyme CPI-enzyme 2 from Gloydius ussuriensis (Ussuri mamushi).